Reading from the N-terminus, the 603-residue chain is uncharacterized protein (603 aa).

Positions 257-281 (AGEAASSDHDQKISRVTRKRPREPK) are disordered.

This is an uncharacterized protein from Saccharomyces cerevisiae (strain ATCC 204508 / S288c) (Baker's yeast).